Consider the following 472-residue polypeptide: Kynureninase 2 (472 aa).

Residues Leu133, Thr134, 162–165, Asp247, His250, and Tyr272 contribute to the pyridoxal 5'-phosphate site; that span reads FPSD. Lys273 is subject to N6-(pyridoxal phosphate)lysine. Positions 314 and 342 each coordinate pyridoxal 5'-phosphate.

Belongs to the kynureninase family. In terms of assembly, homodimer. It depends on pyridoxal 5'-phosphate as a cofactor.

The protein resides in the cytoplasm. The enzyme catalyses L-kynurenine + H2O = anthranilate + L-alanine + H(+). It catalyses the reaction 3-hydroxy-L-kynurenine + H2O = 3-hydroxyanthranilate + L-alanine + H(+). The protein operates within amino-acid degradation; L-kynurenine degradation; L-alanine and anthranilate from L-kynurenine: step 1/1. It functions in the pathway cofactor biosynthesis; NAD(+) biosynthesis; quinolinate from L-kynurenine: step 2/3. Functionally, catalyzes the cleavage of L-kynurenine (L-Kyn) and L-3-hydroxykynurenine (L-3OHKyn) into anthranilic acid (AA) and 3-hydroxyanthranilic acid (3-OHAA), respectively. The protein is Kynureninase 2 (kyn-2) of Neurospora crassa (strain ATCC 24698 / 74-OR23-1A / CBS 708.71 / DSM 1257 / FGSC 987).